The sequence spans 484 residues: Nuclear rim protein 1 (484 aa).

Position 3 is a phosphoserine (Ser3). The next 2 membrane-spanning stretches (helical) occupy residues 145-165 (FTIF…MFGY) and 252-272 (TAIV…AIVF). Residues 416 to 457 (SSNENLEKGGAFLPNQDQNRPSKSLSPLRKTPLSARQKRFEG) are disordered. The residue at position 417 (Ser417) is a Phosphoserine. Positions 430-440 (NQDQNRPSKSL) are enriched in polar residues. At Ser474 the chain carries Phosphoserine.

It belongs to the NUR1 family. As to quaternary structure, interacts with CSM1.

The protein resides in the nucleus membrane. Member of a perinuclear network that controls recombination at multiple loci to maintain genome stability. Required for rDNA repeat stability. The polypeptide is Nuclear rim protein 1 (NUR1) (Saccharomyces cerevisiae (strain Lalvin EC1118 / Prise de mousse) (Baker's yeast)).